A 195-amino-acid chain; its full sequence is Glycerol-3-phosphate acyltransferase (195 aa).

The next 6 membrane-spanning stretches (helical) occupy residues Gly-4 to Leu-24, Gly-53 to Ala-73, Thr-80 to Phe-100, Leu-110 to Ala-130, Phe-133 to Leu-153, and Tyr-154 to Ile-174.

Belongs to the PlsY family. In terms of assembly, probably interacts with PlsX.

It is found in the cell inner membrane. The enzyme catalyses an acyl phosphate + sn-glycerol 3-phosphate = a 1-acyl-sn-glycero-3-phosphate + phosphate. The protein operates within lipid metabolism; phospholipid metabolism. Functionally, catalyzes the transfer of an acyl group from acyl-phosphate (acyl-PO(4)) to glycerol-3-phosphate (G3P) to form lysophosphatidic acid (LPA). This enzyme utilizes acyl-phosphate as fatty acyl donor, but not acyl-CoA or acyl-ACP. The chain is Glycerol-3-phosphate acyltransferase from Mesorhizobium japonicum (strain LMG 29417 / CECT 9101 / MAFF 303099) (Mesorhizobium loti (strain MAFF 303099)).